A 155-amino-acid polypeptide reads, in one-letter code: Cyanate hydratase (155 aa).

Residues Arg95, Glu98, and Ser121 contribute to the active site.

Belongs to the cyanase family.

The catalysed reaction is cyanate + hydrogencarbonate + 3 H(+) = NH4(+) + 2 CO2. Functionally, catalyzes the reaction of cyanate with bicarbonate to produce ammonia and carbon dioxide. In Pseudomonas syringae pv. syringae (strain B728a), this protein is Cyanate hydratase.